Reading from the N-terminus, the 152-residue chain is Protein SprT-like (152 aa).

Residues 7-147 (QRLVEEVSLQ…CGKCKGKLKP (141 aa)) enclose the SprT-like domain. Residue His67 coordinates Zn(2+). Residue Glu68 is part of the active site. Zn(2+) is bound at residue His71.

Belongs to the SprT family. Zn(2+) serves as cofactor.

It is found in the cytoplasm. The polypeptide is Protein SprT-like (Bacillus cereus (strain B4264)).